Reading from the N-terminus, the 1133-residue chain is Protein TPR3 (1133 aa).

The LisH domain maps to 4 to 36; that stretch reads LSRELVFLILQFLDEEKFKETVHKLEQESGFYF. A CTLH domain is found at 34 to 92; sequence FYFNMKYFEDEVINGNWDEVERYLGGFTKVDDNRYSMKIFFEIRKQKYLEALDKHDRSK. The disordered stretch occupies residues 287-307; that stretch reads PTTANPSMDYPSGDSDHVSKR. 12 WD repeats span residues 348–388, 410–449, 455–496, 499–540, 543–586, 590–629, 634–673, 771–810, 837–875, 878–918, 921–960, and 1014–1053; these read SQGS…RLVL, DPTV…DIRQ, AHVG…KQFT, GHEA…SRVD, APGH…VKRT, FRKR…LLTT, GGLP…RLLR, MRTS…RNSS, NPEE…TMTT, PPPP…VKSK, GHSK…KLKS, and ENSS…LQCR. The segment at 1099–1133 is disordered; that stretch reads ESERKWGNPPPAENGSTSALSTPPNGASSSDQPER. Over residues 1112-1133 the composition is skewed to polar residues; it reads NGSTSALSTPPNGASSSDQPER.

Tetramer. Interacts with D53. Interacts with MODD and HDAC1. Interacts with WOX1. Interacts with MOF1. In terms of tissue distribution, expressed in panicles, stems, leaves, spikelets and seed endosperm.

Its function is as follows. Probable downstream regulator of strigolactones signaling. Functions in a complex with MODD and HDAC1 to down-regulate the histone acetylation level at BZIP46 target genes. BZIP46 is a positive regulator of abscisic acid (ABA) signaling and drought stress tolerance. The polypeptide is Protein TPR3 (Oryza sativa subsp. japonica (Rice)).